Here is a 582-residue protein sequence, read N- to C-terminus: ATP-dependent lipid A-core flippase (582 aa).

5 helical membrane-spanning segments follow: residues 16 to 36, 63 to 83, 153 to 173, 253 to 273, and 275 to 295; these read LWPT…ALIL, VLVW…ITSY, IIGL…ILIV, PIIQ…ASFP, and VMDN…IALM. An ABC transmembrane type-1 domain is found at 28-310; it reads IVAGVALILN…LTNVNAQFQR (283 aa). Residues 342 to 578 form the ABC transporter domain; it reads VEFRNVTFTY…RGVYAQLHKM (237 aa). 376–383 serves as a coordination point for ATP; it reads GRSGSGKS.

It belongs to the ABC transporter superfamily. Lipid exporter (TC 3.A.1.106) family. As to quaternary structure, homodimer.

The protein resides in the cell inner membrane. The catalysed reaction is ATP + H2O + lipid A-core oligosaccharideSide 1 = ADP + phosphate + lipid A-core oligosaccharideSide 2.. Its function is as follows. Involved in lipopolysaccharide (LPS) biosynthesis. Translocates lipid A-core from the inner to the outer leaflet of the inner membrane. Transmembrane domains (TMD) form a pore in the inner membrane and the ATP-binding domain (NBD) is responsible for energy generation. In Shigella sonnei (strain Ss046), this protein is ATP-dependent lipid A-core flippase.